Here is a 73-residue protein sequence, read N- to C-terminus: Defensin-like protein 6 (73 aa).

The first 26 residues, 1–26 (MENKFFAAFFLLLVLFSSQEIIGGEG), serve as a signal peptide directing secretion. Intrachain disulfides connect C29-C73, C40-C60, C46-C67, and C50-C69.

Belongs to the DEFL family.

It is found in the secreted. In terms of biological role, confers broad-spectrum resistance to pathogens. This is Defensin-like protein 6 (PDF2.5) from Arabidopsis thaliana (Mouse-ear cress).